Consider the following 455-residue polypeptide: Probable glycine dehydrogenase (decarboxylating) subunit 1 (455 aa).

The protein belongs to the GcvP family. N-terminal subunit subfamily. As to quaternary structure, the glycine cleavage system is composed of four proteins: P, T, L and H. In this organism, the P 'protein' is a heterodimer of two subunits.

The catalysed reaction is N(6)-[(R)-lipoyl]-L-lysyl-[glycine-cleavage complex H protein] + glycine + H(+) = N(6)-[(R)-S(8)-aminomethyldihydrolipoyl]-L-lysyl-[glycine-cleavage complex H protein] + CO2. In terms of biological role, the glycine cleavage system catalyzes the degradation of glycine. The P protein binds the alpha-amino group of glycine through its pyridoxal phosphate cofactor; CO(2) is released and the remaining methylamine moiety is then transferred to the lipoamide cofactor of the H protein. This is Probable glycine dehydrogenase (decarboxylating) subunit 1 from Francisella tularensis subsp. holarctica (strain FTNF002-00 / FTA).